The following is a 432-amino-acid chain: Dihydroorotase (432 aa).

2 residues coordinate Zn(2+): His-60 and His-62. Substrate is bound by residues 62-64 (HLR) and Asn-94. Positions 152, 179, and 232 each coordinate Zn(2+). Asn-278 is a binding site for substrate. Asp-305 is a binding site for Zn(2+). Asp-305 is an active-site residue. Substrate is bound by residues His-309 and 323–324 (FG).

It belongs to the metallo-dependent hydrolases superfamily. DHOase family. Class I DHOase subfamily. Requires Zn(2+) as cofactor.

It catalyses the reaction (S)-dihydroorotate + H2O = N-carbamoyl-L-aspartate + H(+). Its pathway is pyrimidine metabolism; UMP biosynthesis via de novo pathway; (S)-dihydroorotate from bicarbonate: step 3/3. Its function is as follows. Catalyzes the reversible cyclization of carbamoyl aspartate to dihydroorotate. This chain is Dihydroorotase, found in Elusimicrobium minutum (strain Pei191).